Consider the following 167-residue polypeptide: Arginine repressor (167 aa).

The protein belongs to the ArgR family.

It is found in the cytoplasm. It participates in amino-acid biosynthesis; L-arginine biosynthesis [regulation]. Regulates arginine biosynthesis genes. The chain is Arginine repressor from Mycobacterium leprae (strain Br4923).